The primary structure comprises 115 residues: Con-Ins T1B (115 aa).

A signal peptide spans 1–24 (MTTSFYFLLMALGLLLYVCQSSFG). Residues 25–29 (NQHTR) constitute a propeptide that is removed on maturation. Pro-34 carries the post-translational modification 4-hydroxyproline; partial. Disulfide bonds link Cys-38-Cys-101, Cys-50-Cys-114, and Cys-100-Cys-105. The propeptide at 52–94 (RKRNDAGKKRGQASPLWQRGGSLSMLKARAKRNEAFHLQRAHR) is c peptide. Glu-98 is modified (4-carboxyglutamate). Pro-104 carries the post-translational modification 4-hydroxyproline; partial. A 4-carboxyglutamate; partial modification is found at Glu-109. A Cysteine amide modification is found at Cys-114.

This sequence belongs to the insulin family. As to quaternary structure, heterodimer of A and B chains; disulfide-linked. As to expression, expressed by the venom gland.

It is found in the secreted. In terms of biological role, this venom insulin, from a fish-hunting cone snail, facilitates prey capture by rapidly inducing hypoglycemic shock. It is one of the smallest known insulin found in nature and lacks the C-terminal segment of the B chain that, in human insulin, mediates engagement of the insulin receptor (INSR) and assembly of the hormone's hexameric storage form. Despite lacking this segment, it both binds and activates human insulin receptor (long isoform (HIR-B) of INSR) with a high potency (EC(50)=12.0 nM). In vivo, intraperitoneal injection of this peptide into zebrafish lowers blood glucose with a lower potency than human insulin. In addition, when applied to water, this peptide reduces overall locomotor activity of zebrafish larvae, observed as a significant decrease in the percentage of time spent swimming and movement frequency. When tested on a mouse model of diabetes, this insulin also lowers blood glucose with a 10-fold lower potency than human insulin. The sequence is that of Con-Ins T1B from Conus tulipa (Fish-hunting cone snail).